A 471-amino-acid polypeptide reads, in one-letter code: Variant surface glycoprotein ILTAT 1.1BC (471 aa).

Residues 1-21 (MVKAIASLMLLHIWAIEEIKA) form the signal peptide. Residue asparagine 130 is glycosylated (N-linked (GlcNAc...) asparagine). Positions 158-168 (TVSKTTECNTE) are enriched in polar residues. Disordered stretches follow at residues 158-183 (TVSK…TLSK) and 204-232 (GGAC…TTAS). Residues 214 to 226 (DKIHITNETDSKN) show a composition bias toward basic and acidic residues. 2 N-linked (GlcNAc...) asparagine glycosylation sites follow: asparagine 220 and asparagine 260. 2 disulfides stabilise this stretch: cysteine 397–cysteine 410 and cysteine 406–cysteine 421. The tract at residues 432–454 (AEQAATNQETEGKDGKTTNTTGS) is disordered. Asparagine 450 carries N-linked (GlcNAc...) asparagine glycosylation. Serine 454 carries GPI-anchor amidated serine lipidation. Positions 455–471 (NSFLINKAPVLLAFLLL) are cleaved as a propeptide — removed in mature form.

It is found in the cell membrane. Its function is as follows. VSG forms a coat on the surface of the parasite. The trypanosome evades the immune response of the host by expressing a series of antigenically distinct VSGs from an estimated 1000 VSG genes. The protein is Variant surface glycoprotein ILTAT 1.1BC of Trypanosoma brucei brucei.